The primary structure comprises 432 residues: Solute carrier family 35 member F5 (432 aa).

Positions 1-33 are cleaved as a signal peptide; the sequence is MFLPSTTNHSSAPLQKHLCLFCTFWALLFGSHG. Residue serine 116 is modified to Phosphoserine. A run of 8 helical transmembrane segments spans residues 152–172, 177–197, 205–225, 236–256, 270–290, 304–324, 329–349, and 361–381; these read ISFF…EALS, AIVN…AAVF, FTLS…LVNL, TIGS…IVMI, MFFG…FFLL, VVLM…EFLW, FLTS…LSII, and WLFF…TLLC. In terms of domain architecture, EamA spans 161 to 225; it reads FLANLSYQEA…SIGGVVLVNL (65 aa).

Belongs to the SLC35F solute transporter family.

It is found in the membrane. Putative solute transporter. The polypeptide is Solute carrier family 35 member F5 (SLC35F5) (Macaca fascicularis (Crab-eating macaque)).